Reading from the N-terminus, the 212-residue chain is Peptidyl-prolyl cis-trans isomerase-like 3 (212 aa).

The 198-residue stretch at 1–198 (MSVTLHTTHG…EGEEGGYEAI (198 aa)) folds into the PPIase cyclophilin-type domain.

The protein belongs to the cyclophilin-type PPIase family. PPIL3 subfamily.

The catalysed reaction is [protein]-peptidylproline (omega=180) = [protein]-peptidylproline (omega=0). In terms of biological role, PPIases accelerate the folding of proteins. It catalyzes the cis-trans isomerization of proline imidic peptide bonds in oligopeptides. The protein is Peptidyl-prolyl cis-trans isomerase-like 3 (cyp10) of Aspergillus fumigatus (strain ATCC MYA-4609 / CBS 101355 / FGSC A1100 / Af293) (Neosartorya fumigata).